The sequence spans 208 residues: V-type ATP synthase subunit D (208 aa).

It belongs to the V-ATPase D subunit family.

Functionally, produces ATP from ADP in the presence of a proton gradient across the membrane. This chain is V-type ATP synthase subunit D, found in Streptococcus pyogenes serotype M49 (strain NZ131).